The following is a 207-amino-acid chain: Thiamine-phosphate synthase (207 aa).

Residues 36 to 40 (QLRIK) and Asp68 contribute to the 4-amino-2-methyl-5-(diphosphooxymethyl)pyrimidine site. Residues Asp69 and Asp88 each contribute to the Mg(2+) site. A 4-amino-2-methyl-5-(diphosphooxymethyl)pyrimidine-binding site is contributed by Ser106. 2-[(2R,5Z)-2-carboxy-4-methylthiazol-5(2H)-ylidene]ethyl phosphate is bound at residue 132 to 134 (TKT). Lys135 is a binding site for 4-amino-2-methyl-5-(diphosphooxymethyl)pyrimidine. Residues Gly162 and 182–183 (VS) each bind 2-[(2R,5Z)-2-carboxy-4-methylthiazol-5(2H)-ylidene]ethyl phosphate.

The protein belongs to the thiamine-phosphate synthase family. Requires Mg(2+) as cofactor.

It carries out the reaction 2-[(2R,5Z)-2-carboxy-4-methylthiazol-5(2H)-ylidene]ethyl phosphate + 4-amino-2-methyl-5-(diphosphooxymethyl)pyrimidine + 2 H(+) = thiamine phosphate + CO2 + diphosphate. The catalysed reaction is 2-(2-carboxy-4-methylthiazol-5-yl)ethyl phosphate + 4-amino-2-methyl-5-(diphosphooxymethyl)pyrimidine + 2 H(+) = thiamine phosphate + CO2 + diphosphate. The enzyme catalyses 4-methyl-5-(2-phosphooxyethyl)-thiazole + 4-amino-2-methyl-5-(diphosphooxymethyl)pyrimidine + H(+) = thiamine phosphate + diphosphate. Its pathway is cofactor biosynthesis; thiamine diphosphate biosynthesis; thiamine phosphate from 4-amino-2-methyl-5-diphosphomethylpyrimidine and 4-methyl-5-(2-phosphoethyl)-thiazole: step 1/1. Condenses 4-methyl-5-(beta-hydroxyethyl)thiazole monophosphate (THZ-P) and 2-methyl-4-amino-5-hydroxymethyl pyrimidine pyrophosphate (HMP-PP) to form thiamine monophosphate (TMP). This Pyrococcus abyssi (strain GE5 / Orsay) protein is Thiamine-phosphate synthase.